The primary structure comprises 731 residues: MSADVSTTPAAENVNGAAEASPAPAAAAPSATTPEVTAVENSTPAPAANQPHSASLYVGELDPSVTEAMLYELFSSIGQVASIRVCRDAVTRRSLGYAYVNYNNTADGERALEDLNYTLIKGKPCRIMWSQRDPALRKTGQGNVFIKNLDSAIDNKALHDTFAAFGNILSCKVAQDEFGNSKGYGFVHYETAEAANNAIKHVNGMLLNDKKVFVGHHISKKDRQSKFEEMKANFTNVYIKNLDSEIDDDEFRKMFEKFGEITSATLSRDQEGKSRGFGFVNFSTHESAQAAVEEMNDKEIRSQKLYVGRAQKKHEREEELRKQYEAARLEKASKYQGVNLYVKNLTDDIDDEKLRELFGPYGTITSAKVMRDTNVERDQSPDSAGKEKEADKENDKEATPEAEKAEKAEEKPSESSEEKDKEAKKSDKKPFGKSKGFGFVCFSSPDEASKAVTEMNQRMVNGKPLYVALAQRKDVRRSQLEASIQARNTIRQQQAAAAAGMPQPYMQPAVFYGPGQQGFIPGGQRGMAFPPQPGMVMGIPGGRPGQYPGPFPGQQGGRGMGPNQQIPPNFAQGIPMGMQGPGGIPNGMGYPQMAQVQFGRGAGGRGQVPGMPMGQGMRGGPGYGQGRGAPVQQGQMRPGQGGRGQNAAAPAGPQEGAAGGVNAQTLGAAPPAQQKQMLGEALYPKIQAQQPELAGKITGMLLEMDNTELLSLTRKPCAPRSMRPLAFTMST.

The segment covering 1 to 10 (MSADVSTTPA) has biased composition (polar residues). Residues 1-51 (MSADVSTTPAAENVNGAAEASPAPAAAAPSATTPEVTAVENSTPAPAANQP) form a disordered region. A compositionally biased stretch (low complexity) spans 17–39 (AAEASPAPAAAAPSATTPEVTAV). 4 consecutive RRM domains span residues 54 to 132 (ASLY…WSQR), 142 to 219 (GNVF…HHIS), 235 to 312 (TNVY…RAQK), and 338 to 472 (VNLY…LAQR). 2 disordered regions span residues 369–429 (VMRD…SDKK) and 603–665 (GGRG…NAQT). The span at 616–627 (GMRGGPGYGQGR) shows a compositional bias: gly residues. Residues 645-656 (QNAAAPAGPQEG) are compositionally biased toward low complexity. The PABC domain maps to 658 to 731 (AGGVNAQTLG…MRPLAFTMST (74 aa)).

The protein belongs to the polyadenylate-binding protein type-1 family.

The protein localises to the cytoplasm. The protein resides in the nucleus. Functionally, binds the poly(A) tail of mRNA. Appears to be an important mediator of the multiple roles of the poly(A) tail in mRNA biogenesis, stability and translation. In the nucleus, involved in both mRNA cleavage and polyadenylation. Is also required for efficient mRNA export to the cytoplasm. Acts in concert with a poly(A)-specific nuclease (PAN) to affect poly(A) tail shortening, which may occur concomitantly with either nucleocytoplasmic mRNA transport or translational initiation. In the cytoplasm, stimulates translation initiation and regulates mRNA decay through translation termination-coupled poly(A) shortening, probably mediated by PAN. The sequence is that of Polyadenylate-binding protein, cytoplasmic and nuclear (pab1) from Aspergillus niger (strain ATCC MYA-4892 / CBS 513.88 / FGSC A1513).